The following is a 213-amino-acid chain: Glycerol-3-phosphate acyltransferase (213 aa).

6 helical membrane passes run 3 to 23 (ILLL…LWIG), 55 to 75 (ITFL…IWLG), 80 to 100 (SPLI…FTGF), 110 to 130 (AGVL…VFAL), 142 to 162 (SITA…IHFL), and 163 to 183 (LDGY…VIIF).

Belongs to the PlsY family. As to quaternary structure, probably interacts with PlsX.

It is found in the cell membrane. It carries out the reaction an acyl phosphate + sn-glycerol 3-phosphate = a 1-acyl-sn-glycero-3-phosphate + phosphate. It functions in the pathway lipid metabolism; phospholipid metabolism. Functionally, catalyzes the transfer of an acyl group from acyl-phosphate (acyl-PO(4)) to glycerol-3-phosphate (G3P) to form lysophosphatidic acid (LPA). This enzyme utilizes acyl-phosphate as fatty acyl donor, but not acyl-CoA or acyl-ACP. The protein is Glycerol-3-phosphate acyltransferase of Streptococcus thermophilus (strain CNRZ 1066).